The chain runs to 727 residues: Pre-B-cell leukemia transcription factor-interacting protein 1 (727 aa).

Polar residues predominate over residues 1–10; the sequence is MASCPDSDNS. The disordered stretch occupies residues 1-135; the sequence is MASCPDSDNS…SPHRSLPSSP (135 aa). A compositionally biased stretch (low complexity) spans 39–53; sequence RAPQSPSRAAAEESA. Phosphoserine is present on S43. The span at 61-70 shows a compositional bias: polar residues; it reads TVSQNESSKS. A phosphoserine mark is found at S130, S134, S147, S148, and S149. Phosphothreonine is present on T153. Coiled coils occupy residues 269-353 and 380-421; these read QNMA…QGAD and SPGF…SLKE. The short motif at 488 to 506 is the Nuclear localization signal element; it reads WKTEHWKHKKEASGREKSW. Disordered stretches follow at residues 491-568 and 701-727; these read EHWK…AKDR and KRSGKKDKHLQNRVVGPREEHSPHRQG. Composition is skewed to basic and acidic residues over residues 498-544, 551-568, and 716-727; these read EASG…EPPR, PSGERQKHPRWKEGAKDR, and GPREEHSPHRQG. The Nuclear localization signal motif lies at 696-719; the sequence is DKALKKRSGKKDKHLQNRVVGPRE.

As to quaternary structure, interacts with ESR1, PBX1, PBX2 and PBX3. Interacts with TEX11.

The protein resides in the cytoplasm. The protein localises to the cytoskeleton. It is found in the nucleus. In terms of biological role, regulator of pre-B-cell leukemia transcription factors (BPXs) function. Inhibits the binding of PBX1-HOX complex to DNA and blocks the transcriptional activity of E2A-PBX1. Tethers estrogen receptor-alpha (ESR1) to microtubules and allows them to influence estrogen receptors-alpha signaling. The polypeptide is Pre-B-cell leukemia transcription factor-interacting protein 1 (PBXIP1) (Bos taurus (Bovine)).